A 168-amino-acid polypeptide reads, in one-letter code: Photosystem I assembly protein Ycf3 (168 aa).

TPR repeat units lie at residues 35–68, 72–105, and 120–153; these read AFTY…EIDP, SYIL…NPFL, and GEQA…TPGN.

It belongs to the Ycf3 family.

It localises to the plastid. Its subcellular location is the chloroplast thylakoid membrane. In terms of biological role, essential for the assembly of the photosystem I (PSI) complex. May act as a chaperone-like factor to guide the assembly of the PSI subunits. The polypeptide is Photosystem I assembly protein Ycf3 (Piper cenocladum (Ant piper)).